A 510-amino-acid chain; its full sequence is Histidine ammonia-lyase (510 aa).

The segment at residues Ala143–Gly145 is a cross-link (5-imidazolinone (Ala-Gly)). Ser144 carries the 2,3-didehydroalanine (Ser) modification.

Belongs to the PAL/histidase family. In terms of processing, contains an active site 4-methylidene-imidazol-5-one (MIO), which is formed autocatalytically by cyclization and dehydration of residues Ala-Ser-Gly.

The protein resides in the cytoplasm. It carries out the reaction L-histidine = trans-urocanate + NH4(+). It participates in amino-acid degradation; L-histidine degradation into L-glutamate; N-formimidoyl-L-glutamate from L-histidine: step 1/3. This chain is Histidine ammonia-lyase, found in Shewanella woodyi (strain ATCC 51908 / MS32).